The primary structure comprises 2893 residues: Genome polyprotein (2893 aa).

Residues 206 to 226 form a disordered region; sequence VQAKPEMDNPNPGPDGEGEVE. In terms of domain architecture, SF3 helicase spans 1446–1612; that stretch reads SKLKTDLMEM…EEKKRGCKHC (167 aa). 1472–1479 contacts ATP; it reads GASGIGKS. The Peptidase C3 domain occupies 2119–2345; it reads GSTQQVDAAV…VAEPLVHEMF (227 aa). Catalysis depends on for 3C-like protease activity residues H2170, N2227, and C2307. Residues 2633–2763 form the RdRp catalytic domain; the sequence is THIVTGDYKN…NVSDNMIDKF (131 aa).

Post-translationally, specific enzymatic cleavages in vivo by the viral 3C-like protease yield three mature proteins. 3C-like protease is cleaved autocatalytically.

It localises to the virion. The catalysed reaction is RNA(n) + a ribonucleoside 5'-triphosphate = RNA(n+1) + diphosphate. It catalyses the reaction ATP + H2O = ADP + phosphate + H(+). Inhibited by Rupintrivir. In terms of biological role, capsid protein that assembles with the capsid proteins VP1 and VP3 to form a pseudo-T3 icosahedral capsid of about 40 nm. Functionally, capsid protein that assembles with the capsid proteins VP1 and VP2 to form a pseudo T3 icosahedral capsid of about 40 nm. Capsid protein that assembles with the capsid proteins VP2 and VP3 to form a pseudo T3 icosahedral capsid of about 40 nm. Its function is as follows. Displays RNA helix destabilizing and strand annealing acceleration activity. This activity is necessary at several points during genome replication, for example to separate duplexes that form after genome replication. In terms of biological role, cysteine protease that generates mature viral proteins from the precursor polyprotein. Functionally, replicates genomic and antigenomic RNA. In Deformed wing virus (DWV), this protein is Genome polyprotein.